The following is a 627-amino-acid chain: RNA interference defective protein 10 (627 aa).

3 disordered regions span residues 1–31, 467–487, and 523–589; these read MSNHRSNFRDYQREGIRANNAGTSGDAVRQN, QRDTDEQYDVHQEGPSNHDQY, and SSVR…SEDY. 3 stretches are compositionally biased toward basic and acidic residues: residues 7-16, 467-478, and 526-537; these read NFRDYQREGI, QRDTDEQYDVHQ, and REPEHPSARSRD.

The protein belongs to the maelstrom family. Interacts with rde-11 (via RING-type zinc finger domain). Interacts with ergo-1.

Its function is as follows. In complex with rde-11, required in the endogenous and exogenous siRNA pathway for biogenesis and accumulation of secondary small interfering RNA (siRNA) intermediates, such as 22G-siRNAs derived from ergo-1 targets. This chain is RNA interference defective protein 10, found in Caenorhabditis elegans.